Consider the following 176-residue polypeptide: Late embryogenesis abundant protein 49 (176 aa).

2 consecutive SMP domains span residues 49 to 106 and 115 to 171; these read TTLT…RNQK and NLGD…KLNH.

This sequence belongs to the LEA type SMP family.

It localises to the cytoplasm. It is found in the nucleus. In terms of biological role, LEA proteins are late embryonic proteins abundant in higher plant seed embryos. The function of those proteins is not known. This Arabidopsis thaliana (Mouse-ear cress) protein is Late embryogenesis abundant protein 49.